A 426-amino-acid polypeptide reads, in one-letter code: Putative F-box protein At4g38870 (426 aa).

Residues 47–92 (SVNSELLPVDLIMEILKKLSLKPLIRFLCVSKLWASIIRDPYFMKL) form the F-box domain.

The chain is Putative F-box protein At4g38870 from Arabidopsis thaliana (Mouse-ear cress).